A 215-amino-acid polypeptide reads, in one-letter code: Somatotropin (215 aa).

The signal sequence occupies residues 1–25 (MAPGMRVCLLLLIAFTLLGPQRAAA). H44 is a Zn(2+) binding site. Phosphoserine is present on S130. Residue E197 participates in Zn(2+) binding.

It belongs to the somatotropin/prolactin family.

Its subcellular location is the secreted. Functionally, plays an important role in growth control. Its major role in stimulating body growth is to stimulate the liver and other tissues to secrete IGF1. It stimulates both the differentiation and proliferation of myoblasts. It also stimulates amino acid uptake and protein synthesis in muscle and other tissues. In Monodelphis domestica (Gray short-tailed opossum), this protein is Somatotropin (GH1).